Consider the following 520-residue polypeptide: 4-hydroxyphenylacetate 3-monooxygenase oxygenase component (520 aa).

It belongs to the FADH(2)-utilizing monooxygenase family. In terms of assembly, 4-HPA 3-monooxygenase consists of a reductase component HpaC and an oxygenase component HpaB.

The catalysed reaction is 4-hydroxyphenylacetate + FADH2 + O2 = 3,4-dihydroxyphenylacetate + FAD + H2O + H(+). Its pathway is aromatic compound metabolism; 4-hydroxyphenylacetate degradation; pyruvate and succinate semialdehyde from 4-hydroxyphenylacetate: step 1/7. Its function is as follows. Utilizes FADH(2) supplied by HpaC or by another flavin reductase, to catalyze the hydroxylation of 4-hydroxyphenylacetic acid, leading to the production of 3,4-DHPA. Can also oxidize phenol to catechol, and hydroxylate other phenol derivatives. This Escherichia coli protein is 4-hydroxyphenylacetate 3-monooxygenase oxygenase component (hpaB).